Here is a 199-residue protein sequence, read N- to C-terminus: Cilia- and flagella-associated protein 20 (199 aa).

It belongs to the CFAP20 family. Expressed in spermatocytes and chordotonal organs in sensory neurons of the antenna.

Its subcellular location is the nucleus. It is found in the nucleolus. It localises to the cell projection. The protein resides in the cilium. The protein localises to the cytoplasm. Its subcellular location is the cytoskeleton. It is found in the microtubule organizing center. It localises to the centrosome. The protein resides in the centriole. The protein localises to the flagellum. Its subcellular location is the cilium axoneme. Cilium- and flagellum-specific protein that plays a role in axonemal structure organization and motility. Microtubule inner protein (MIP) part of the dynein-decorated doublet microtubules (DMTs) in cilia axoneme, which is required for motile cilia beating. Involved in the regulation of the size and morphology of cilia. Required for sperm individualization, differentiation of the sperm flagellum and tubulin polyglycylation of axonemal microtubules. The chain is Cilia- and flagella-associated protein 20 from Drosophila melanogaster (Fruit fly).